A 61-amino-acid polypeptide reads, in one-letter code: Small ribosomal subunit protein uS14 (61 aa).

Zn(2+) contacts are provided by Cys24, Cys27, Cys40, and Cys43.

The protein belongs to the universal ribosomal protein uS14 family. Zinc-binding uS14 subfamily. As to quaternary structure, part of the 30S ribosomal subunit. Contacts proteins S3 and S10. Zn(2+) is required as a cofactor.

In terms of biological role, binds 16S rRNA, required for the assembly of 30S particles and may also be responsible for determining the conformation of the 16S rRNA at the A site. This Anoxybacillus flavithermus (strain DSM 21510 / WK1) protein is Small ribosomal subunit protein uS14.